The following is a 445-amino-acid chain: Histamine H3 receptor (445 aa).

At 1–40 (MERAPPDGLMNASGALAGEAAAAAGGARTFSAAWTAVLAA) the chain is on the extracellular side. Residue N11 is glycosylated (N-linked (GlcNAc...) asparagine). Residues 41 to 61 (LMALLIVATVLGNALVMLAFV) traverse the membrane as a helical segment. At 62–71 (ADSSLRTQNN) the chain is on the cytoplasmic side. A helical membrane pass occupies residues 72–92 (FFLLNLAISDFLVGVFCIPLY). Topologically, residues 93–109 (VPYVLTGRWTFGRGLCK) are extracellular. Residues C108 and C189 are joined by a disulfide bond. A helical transmembrane segment spans residues 110 to 130 (LWLVVDYLLCTSSVFNIVLIS). Over 131–157 (YDRFLSVTRAVSYRAQQGDTRRAVRKM) the chain is Cytoplasmic. Residues 158-178 (VLVWVLAFLLYGPAILSWEYL) form a helical membrane-spanning segment. At 179-197 (SGGSSIPEGHCYAEFFYNW) the chain is on the extracellular side. A helical transmembrane segment spans residues 198–218 (YFLITASTLEFFTPFLSVTFF). Topologically, residues 219-359 (NLSIYLNIQR…LSRDKKVAKS (141 aa)) are cytoplasmic. 2 disordered regions span residues 236 to 264 (GGAR…WGCW) and 288 to 336 (AGEA…LEKR). Positions 299–312 (AAASPTSSSGSSSR) are enriched in low complexity. Residues 360-380 (LAIIVSIFGLCWAPYTLLMII) form a helical membrane-spanning segment. Topologically, residues 381 to 398 (RAACHGHCVPDYWYETSF) are extracellular. The helical transmembrane segment at 399-419 (WLLWANSAVNPVLYPLCHYSF) threads the bilayer. Residues 420-445 (RRAFTKLLCPQKLKVQPHSSLEHCWK) are Cytoplasmic-facing. At S439 the chain carries Phosphoserine.

Belongs to the G-protein coupled receptor 1 family. As to expression, expressed widely and abundantly throughout the brain. Highly expressed in discrete neuronal populations such as pyramidal cells in cerebral cortex or cerebellar Purkinje cells.

Its subcellular location is the cell membrane. The H3 subclass of histamine receptors could mediate the histamine signals in CNS and peripheral nervous system. Signals through the inhibition of adenylate cyclase and displays high constitutive activity (spontaneous activity in the absence of agonist). The chain is Histamine H3 receptor (HRH3) from Cavia porcellus (Guinea pig).